The sequence spans 165 residues: Cytochrome c-550-like protein (165 aa).

An N-terminal signal peptide occupies residues 1-38 (MPHLDQKLPMRWRIPSRLWAWVGILALLWLGLASPVAA). Residues cysteine 83, cysteine 86, histidine 87, and cysteine 137 each coordinate heme c.

The protein belongs to the cytochrome c family. PsbV subfamily. It depends on heme c as a cofactor.

It localises to the cellular thylakoid membrane. Its function is as follows. Possible low-potential cytochrome c. The polypeptide is Cytochrome c-550-like protein (psbV2) (Synechococcus sp. (strain JA-2-3B'a(2-13)) (Cyanobacteria bacterium Yellowstone B-Prime)).